Consider the following 93-residue polypeptide: uncharacterized protein (93 aa).

An N-terminal signal peptide occupies residues methionine 1 to glycine 11. The N-palmitoyl cysteine moiety is linked to residue cysteine 12. Cysteine 12 carries S-diacylglycerol cysteine lipidation.

It localises to the cell membrane. This is an uncharacterized protein from Escherichia coli O6:K15:H31 (strain 536 / UPEC).